The sequence spans 218 residues: Oxidative stress regulator AosR (218 aa).

The CXXXC signature appears at 5–9 (CGRRC). C5 and C9 are disulfide-bonded.

The protein belongs to the AosR family. In terms of assembly, homodimer. Under oxidative stress, interacts with the extracytoplasmic-function (ECF) RNA polymerase sigma factor SigH.

With respect to regulation, activity is modulated by the formation of a disulfide bound within the N-terminal Cys-X-X-X-Cys (CXXXC) motif. This intramolecular disulfide bond is formed in response to oxidative stress, and results in oxidative stress-dependent interaction with the sigma factor SigH. Its function is as follows. Transcription factor crucial for intra-mycobacterial redox homeostasis and protection against host-derived oxidative and nitrosative radicals. In response to oxidative stress, interacts with the ECF sigma factor SigH and, in conjunction with SigH, binds to an auxiliary promoter upstream of mec-cysO-cysM, leading to the transcriptional activation of these genes encoding a non-canonical actinomycete-specific cysteine biosynthesis pathway. Increased transcription of mec-cysO-cysM results in enhanced production of L-cysteine and cysteine-derived antioxidant molecules. Increased production of cysteine protects mycobacteria cells from host phagocyte-derived oxidative and nitrosative stress, thus facilitating the mycobacterial growth in the host. The polypeptide is Oxidative stress regulator AosR (Mycobacterium bovis (strain ATCC BAA-935 / AF2122/97)).